A 337-amino-acid polypeptide reads, in one-letter code: Ketol-acid reductoisomerase (NADP(+)) (337 aa).

In terms of domain architecture, KARI N-terminal Rossmann spans 1–180 (MFYEKDADVD…GGGKSGIIET (180 aa)). Residues 22–25 (YGSQ), R46, S49, S51, and 81–84 (DELQ) contribute to the NADP(+) site. H106 is an active-site residue. G132 contacts NADP(+). The region spanning 181–326 (TFKDECETDL…AELRAMMPWI (146 aa)) is the KARI C-terminal knotted domain. Residues D189, E193, E225, and E229 each contribute to the Mg(2+) site. S250 lines the substrate pocket.

This sequence belongs to the ketol-acid reductoisomerase family. Mg(2+) is required as a cofactor.

It carries out the reaction (2R)-2,3-dihydroxy-3-methylbutanoate + NADP(+) = (2S)-2-acetolactate + NADPH + H(+). The catalysed reaction is (2R,3R)-2,3-dihydroxy-3-methylpentanoate + NADP(+) = (S)-2-ethyl-2-hydroxy-3-oxobutanoate + NADPH + H(+). It participates in amino-acid biosynthesis; L-isoleucine biosynthesis; L-isoleucine from 2-oxobutanoate: step 2/4. The protein operates within amino-acid biosynthesis; L-valine biosynthesis; L-valine from pyruvate: step 2/4. Involved in the biosynthesis of branched-chain amino acids (BCAA). Catalyzes an alkyl-migration followed by a ketol-acid reduction of (S)-2-acetolactate (S2AL) to yield (R)-2,3-dihydroxy-isovalerate. In the isomerase reaction, S2AL is rearranged via a Mg-dependent methyl migration to produce 3-hydroxy-3-methyl-2-ketobutyrate (HMKB). In the reductase reaction, this 2-ketoacid undergoes a metal-dependent reduction by NADPH to yield (R)-2,3-dihydroxy-isovalerate. In Pelagibacter ubique (strain HTCC1062), this protein is Ketol-acid reductoisomerase (NADP(+)).